Consider the following 463-residue polypeptide: Chromosomal replication initiator protein DnaA (463 aa).

The tract at residues 1-83 (MSLTLWQQCL…LRFEVGSKPV (83 aa)) is domain I, interacts with DnaA modulators. The segment at 83 to 126 (VAQAISQPVMVSAHASAPGVVSRPAPTRPSWDNVPALAELSYRS) is domain II. The interval 127-343 (NVNTKHNFDN…GALNRVIANA (217 aa)) is domain III, AAA+ region. ATP is bound by residues Gly171, Gly173, Lys174, and Thr175. A domain IV, binds dsDNA region spans residues 344 to 463 (NFTGRAITID…FSNLIRTLSS (120 aa)).

Belongs to the DnaA family. Oligomerizes as a right-handed, spiral filament on DNA at oriC.

Its subcellular location is the cytoplasm. Its function is as follows. Plays an essential role in the initiation and regulation of chromosomal replication. ATP-DnaA binds to the origin of replication (oriC) to initiate formation of the DNA replication initiation complex once per cell cycle. Binds the DnaA box (a 9 base pair repeat at the origin) and separates the double-stranded (ds)DNA. Forms a right-handed helical filament on oriC DNA; dsDNA binds to the exterior of the filament while single-stranded (ss)DNA is stabiized in the filament's interior. The ATP-DnaA-oriC complex binds and stabilizes one strand of the AT-rich DNA unwinding element (DUE), permitting loading of DNA polymerase. After initiation quickly degrades to an ADP-DnaA complex that is not apt for DNA replication. Binds acidic phospholipids. The polypeptide is Chromosomal replication initiator protein DnaA (Erwinia tasmaniensis (strain DSM 17950 / CFBP 7177 / CIP 109463 / NCPPB 4357 / Et1/99)).